Here is a 465-residue protein sequence, read N- to C-terminus: UDP-N-acetylmuramate--L-alanine ligase (465 aa).

Position 112-118 (112-118) interacts with ATP; that stretch reads GTHGKTT.

Belongs to the MurCDEF family.

Its subcellular location is the cytoplasm. The catalysed reaction is UDP-N-acetyl-alpha-D-muramate + L-alanine + ATP = UDP-N-acetyl-alpha-D-muramoyl-L-alanine + ADP + phosphate + H(+). Its pathway is cell wall biogenesis; peptidoglycan biosynthesis. Cell wall formation. The protein is UDP-N-acetylmuramate--L-alanine ligase of Burkholderia cenocepacia (strain ATCC BAA-245 / DSM 16553 / LMG 16656 / NCTC 13227 / J2315 / CF5610) (Burkholderia cepacia (strain J2315)).